A 315-amino-acid chain; its full sequence is Bifunctional protein FolD (315 aa).

NADP(+)-binding positions include 166-168 (GRS), S193, and I234.

The protein belongs to the tetrahydrofolate dehydrogenase/cyclohydrolase family. Homodimer.

It carries out the reaction (6R)-5,10-methylene-5,6,7,8-tetrahydrofolate + NADP(+) = (6R)-5,10-methenyltetrahydrofolate + NADPH. The enzyme catalyses (6R)-5,10-methenyltetrahydrofolate + H2O = (6R)-10-formyltetrahydrofolate + H(+). Its pathway is one-carbon metabolism; tetrahydrofolate interconversion. Functionally, catalyzes the oxidation of 5,10-methylenetetrahydrofolate to 5,10-methenyltetrahydrofolate and then the hydrolysis of 5,10-methenyltetrahydrofolate to 10-formyltetrahydrofolate. The chain is Bifunctional protein FolD from Treponema pallidum (strain Nichols).